Consider the following 616-residue polypeptide: Coagulation factor XII (616 aa).

The N-terminal stretch at 1-19 is a signal peptide; that stretch reads MRALLLLGILLVSLESALL. The Fibronectin type-II domain maps to 42 to 90; it reads VTGEPCHFPFQYYRQLYYKCIQRGQRGPRPWCATTPNFEKDQRWAYCLE. Cystine bridges form between cysteine 47-cysteine 73, cysteine 61-cysteine 88, cysteine 98-cysteine 110, cysteine 104-cysteine 119, cysteine 121-cysteine 130, cysteine 135-cysteine 163, cysteine 161-cysteine 170, cysteine 178-cysteine 189, cysteine 183-cysteine 198, cysteine 200-cysteine 209, cysteine 217-cysteine 295, cysteine 238-cysteine 277, and cysteine 266-cysteine 290. In terms of domain architecture, EGF-like 1 spans 94 to 131; it reads VKDHCNKGNPCQKGGTCVNMPNGPHCICPDHFTGKHCQ. Threonine 109 is a glycosylation site (O-linked (Fuc) threonine). Positions 133 to 173 constitute a Fibronectin type-I domain; sequence EKCFEPQFLQFFQENEIWHRFEPAGVSKCQCKGPKAQCKPV. The 37-residue stretch at 174 to 210 folds into the EGF-like 2 domain; sequence ASQVCSTNPCLNGGSCLQTEGHRLCRCPTGYAGRLCD. A Kringle domain is found at 216 to 295; that stretch reads RCYSDRGLSY…SWQYCRLARC (80 aa). Residues asparagine 249, asparagine 271, and asparagine 335 are each glycosylated (N-linked (GlcNAc...) asparagine). The interval 303–342 is disordered; that stretch reads PPILTPTQSPSEHQDSPLLSREPQPTTQTPSQNLTSAWCA. Positions 325–338 are enriched in polar residues; that stretch reads PQPTTQTPSQNLTS. 7 disulfide bridges follow: cysteine 358–cysteine 485, cysteine 396–cysteine 412, cysteine 404–cysteine 474, cysteine 435–cysteine 438, cysteine 501–cysteine 570, cysteine 533–cysteine 549, and cysteine 560–cysteine 591. The region spanning 372–615 is the Peptidase S1 domain; sequence IVGGLVALPG…YLAWIQEHTT (244 aa). The Charge relay system role is filled by histidine 411. A glycan (N-linked (GlcNAc...) asparagine) is linked at asparagine 432. Aspartate 460 acts as the Charge relay system in catalysis. Serine 564 acts as the Charge relay system in catalysis.

It belongs to the peptidase S1 family. As to quaternary structure, interacts with HRG; the interaction, which is enhanced in the presence of zinc ions and inhibited by heparin-binding, inhibits factor XII autoactivation and contact-initiated coagulation. Post-translationally, O- and N-glycosylated.

The protein localises to the secreted. The enzyme catalyses Selective cleavage of Arg-|-Ile bonds in factor VII to form factor VIIa and factor XI to form factor XIa.. Activity is promoted in the presence of negatively charged surfaces. Functionally, factor XII is a serum glycoprotein that participates in the initiation of blood coagulation, fibrinolysis, and the generation of bradykinin and angiotensin. Prekallikrein is cleaved by factor XII to form kallikrein, which then cleaves factor XII first to alpha-factor XIIa and then trypsin cleaves it to beta-factor XIIa. Alpha-factor XIIa activates factor XI to factor XIa. This chain is Coagulation factor XII (F12), found in Sus scrofa (Pig).